Reading from the N-terminus, the 64-residue chain is Large ribosomal subunit protein bL28 (64 aa).

This sequence belongs to the bacterial ribosomal protein bL28 family.

This chain is Large ribosomal subunit protein bL28, found in Desulfotalea psychrophila (strain LSv54 / DSM 12343).